Reading from the N-terminus, the 176-residue chain is tRNA (adenine(37)-N6)-methyltransferase (176 aa).

The 94-residue stretch at 1–94 (SFSHIWVQFV…YLPFVEAQPD (94 aa)) folds into the TsaA-like domain. S-adenosyl-L-methionine is bound by residues His-12, 12–13 (HG), Arg-40, Leu-50, and 74–77 (LDGT).

This sequence belongs to the tRNA methyltransferase O family.

It carries out the reaction N(6)-L-threonylcarbamoyladenosine(37) in tRNA + S-adenosyl-L-methionine = N(6)-methyl,N(6)-L-threonylcarbamoyladenosine(37) in tRNA + S-adenosyl-L-homocysteine + H(+). S-adenosyl-L-methionine-dependent methyltransferase responsible for the addition of the methyl group in the formation of N6-methyl-N6-threonylcarbamoyladenosine at position 37 (m(6)t(6)A37) of the tRNA anticodon loop of tRNA(Thr)(GGU). The methyl group of m(6)t(6)A37 appears to slightly improve the efficiency of the tRNA decoding ability. Binds to tRNA. The sequence is that of tRNA (adenine(37)-N6)-methyltransferase from Eikenella corrodens.